The primary structure comprises 434 residues: Probable G-protein coupled receptor B0563.6 (434 aa).

The N-linked (GlcNAc...) asparagine glycan is linked to asparagine 12. 2 consecutive transmembrane segments (helical) span residues 30 to 50 (VLPC…MVLA) and 65 to 85 (LAVA…TEYL). Asparagine 88 carries N-linked (GlcNAc...) asparagine glycosylation. 2 consecutive transmembrane segments (helical) span residues 105–125 (LMLT…VALS) and 147–167 (ATRA…PYAI). Residue asparagine 181 is glycosylated (N-linked (GlcNAc...) asparagine). The next 2 helical transmembrane spans lie at 208–228 (ILRF…MIAF) and 258–278 (GGTV…LLLI). N-linked (GlcNAc...) asparagine glycosylation is found at asparagine 429 and asparagine 430.

The protein belongs to the G-protein coupled receptor 1 family.

The protein localises to the cell membrane. Its function is as follows. Not known. Putative receptor. The sequence is that of Probable G-protein coupled receptor B0563.6 from Caenorhabditis elegans.